The primary structure comprises 643 residues: Fructose-1,6-bisphosphatase class 3 (643 aa).

The protein belongs to the FBPase class 3 family. Requires Mn(2+) as cofactor.

The catalysed reaction is beta-D-fructose 1,6-bisphosphate + H2O = beta-D-fructose 6-phosphate + phosphate. Its pathway is carbohydrate biosynthesis; gluconeogenesis. This chain is Fructose-1,6-bisphosphatase class 3, found in Streptococcus agalactiae serotype Ia (strain ATCC 27591 / A909 / CDC SS700).